A 412-amino-acid chain; its full sequence is L-cysteine:1D-myo-inositol 2-amino-2-deoxy-alpha-D-glucopyranoside ligase (412 aa).

C44 is a Zn(2+) binding site. L-cysteinyl-5'-AMP contacts are provided by residues 44–47 (CGIT), T59, and 82–84 (NVT). The 'HIGH' region signature appears at 46–56 (ITPYDATHLGH). A 'ERGGDP' region motif is present at residues 187–192 (QSGGDP). W227 contacts L-cysteinyl-5'-AMP. A Zn(2+)-binding site is contributed by C231. 249–251 (GSD) lines the L-cysteinyl-5'-AMP pocket. A Zn(2+)-binding site is contributed by H256. L-cysteinyl-5'-AMP is bound at residue I283. The 'KMSKS' region motif lies at 289–293 (KMSKS).

This sequence belongs to the class-I aminoacyl-tRNA synthetase family. MshC subfamily. In terms of assembly, monomer. Zn(2+) serves as cofactor.

The catalysed reaction is 1D-myo-inositol 2-amino-2-deoxy-alpha-D-glucopyranoside + L-cysteine + ATP = 1D-myo-inositol 2-(L-cysteinylamino)-2-deoxy-alpha-D-glucopyranoside + AMP + diphosphate + H(+). In terms of biological role, catalyzes the ATP-dependent condensation of GlcN-Ins and L-cysteine to form L-Cys-GlcN-Ins. This chain is L-cysteine:1D-myo-inositol 2-amino-2-deoxy-alpha-D-glucopyranoside ligase (mshC), found in Mycobacterium leprae (strain TN).